The sequence spans 112 residues: MKVLVVLLVTLVAVAYAAPGPRGLFINLEDGEICVNSMQCKSRCCQHDTILGIARCTHKAMENSECSPKTLYGIYYRCPCERGLTCEGDRSIIGAITNTNYGVCLDSTRSKQ.

An N-terminal signal peptide occupies residues 1 to 17 (MKVLVVLLVTLVAVAYA). The propeptide at 18 to 22 (APGPR) is enterostatin, activation peptide. 5 cysteine pairs are disulfide-bonded: cysteine 34–cysteine 45, cysteine 40–cysteine 56, cysteine 44–cysteine 78, cysteine 66–cysteine 86, and cysteine 80–cysteine 104.

Belongs to the colipase family. As to quaternary structure, forms a 1:1 stoichiometric complex with pancreatic lipase. As to expression, expressed by the pancreas.

The protein localises to the secreted. In terms of biological role, colipase is a cofactor of pancreatic lipase. It allows the lipase to anchor itself to the lipid-water interface. Without colipase the enzyme is washed off by bile salts, which have an inhibitory effect on the lipase. Enterostatin has a biological activity as a satiety signal. The protein is Colipase of Rattus norvegicus (Rat).